The following is a 2961-amino-acid chain: Zinc finger ZZ-type and EF-hand domain-containing protein 1 (2961 aa).

The interval 1–41 is disordered; it reads MGNAPSHSSEDEAAAAGGEGWGPHQDWAAVSGTTPGPGVAA. G2 carries N-myristoyl glycine lipidation. Residues 111–146 enclose the EF-hand domain; sequence CSSEQFEEAFAQFDAEGDGTVDAENMLEALKNSSGA. In terms of domain architecture, DOC spans 226-405; it reads LVQKEKESPG…AIWYWSLLTS (180 aa). Residues S240, S1475, S1488, and S1509 each carry the phosphoserine modification. The segment at 1446–1531 is disordered; it reads TADETSHLQP…PTRRPPFTRG (86 aa). Residues 1485–1502 are compositionally biased toward polar residues; it reads GDQSPGLGTQPKLPSSSG. At T1512 the chain carries Phosphothreonine. The segment covering 1516–1531 has biased composition (low complexity); the sequence is PLSPSTPTRRPPFTRG. S1518 is modified (phosphoserine). T1521 and T1523 each carry phosphothreonine. A phosphoserine mark is found at S1537 and S1540. 2 ZZ-type zinc fingers span residues 1778 to 1833 and 1827 to 1882; these read NVDI…FTCD and NMEF…MVTI. C1783, C1786, C1797, C1800, C1806, C1809, H1819, H1823, C1832, C1835, C1846, C1849, C1855, C1858, H1868, and H1872 together coordinate Zn(2+). 2 disordered regions span residues 1994 to 2078 and 2426 to 2455; these read AVQG…PSPE and LELD…KLDP. Residues 2009–2027 are compositionally biased toward basic and acidic residues; it reads AVHEEIRPVDFKQRNKADK. A compositionally biased stretch (polar residues) spans 2033–2043; that stretch reads KDPSCQTQISD. Over residues 2426-2440 the composition is skewed to basic and acidic residues; that stretch reads LELDERGDREEEVER. Position 2444 is a phosphoserine (S2444). K2667 is modified (N6-acetyllysine).

In terms of assembly, interacts with KLF6 and KLF9. Interacts via (ZZ-type 2 zinc finger) with histone H3 trimethylated at 'Lys-4' (H3K4me3) and histone H3 acetylated at 'Lys-4' (H3K4ac). Expressed at low levels in cerebellum.

Functionally, histone H3 reader which may act as a transcriptional coactivator for KLF6 and KLF9 transcription factors. This chain is Zinc finger ZZ-type and EF-hand domain-containing protein 1, found in Homo sapiens (Human).